Reading from the N-terminus, the 138-residue chain is Acidic phospholipase A2 6 (138 aa).

The first 16 residues, 1 to 16 (MRTLWIMAVLLVGVEG), serve as a signal peptide directing secretion. 7 disulfides stabilise this stretch: C42/C131, C44/C60, C59/C111, C65/C138, C66/C104, C73/C97, and C91/C102. Residues Y43, G45, and G47 each contribute to the Ca(2+) site. H63 is a catalytic residue. D64 contributes to the Ca(2+) binding site. Residue D105 is part of the active site.

This sequence belongs to the phospholipase A2 family. Group II subfamily. D49 sub-subfamily. In terms of assembly, homodimer. Ca(2+) is required as a cofactor. As to expression, expressed by the venom gland.

The protein localises to the secreted. It carries out the reaction a 1,2-diacyl-sn-glycero-3-phosphocholine + H2O = a 1-acyl-sn-glycero-3-phosphocholine + a fatty acid + H(+). In terms of biological role, snake venom phospholipase A2 (PLA2) that has high lipolytic activity. PLA2 catalyzes the calcium-dependent hydrolysis of the 2-acyl groups in 3-sn-phosphoglycerides. This is Acidic phospholipase A2 6 from Craspedocephalus gramineus (Bamboo pit viper).